Reading from the N-terminus, the 169-residue chain is Peptide methionine sulfoxide reductase MsrA (169 aa).

Cys-11 is an active-site residue.

This sequence belongs to the MsrA Met sulfoxide reductase family.

It catalyses the reaction L-methionyl-[protein] + [thioredoxin]-disulfide + H2O = L-methionyl-(S)-S-oxide-[protein] + [thioredoxin]-dithiol. The enzyme catalyses [thioredoxin]-disulfide + L-methionine + H2O = L-methionine (S)-S-oxide + [thioredoxin]-dithiol. Functionally, has an important function as a repair enzyme for proteins that have been inactivated by oxidation. Catalyzes the reversible oxidation-reduction of methionine sulfoxide in proteins to methionine. This is Peptide methionine sulfoxide reductase MsrA from Leifsonia xyli subsp. xyli (strain CTCB07).